The primary structure comprises 41 residues: uncharacterized protein (41 aa).

This is an uncharacterized protein from Treponema pallidum (strain Nichols).